We begin with the raw amino-acid sequence, 223 residues long: Phosphoribosylformylglycinamidine synthase subunit PurQ (223 aa).

The 221-residue stretch at 3–223 folds into the Glutamine amidotransferase type-1 domain; sequence FAVLVFPGSN…MVKSWREQHV (221 aa). Cysteine 85 acts as the Nucleophile in catalysis. Residues histidine 193 and glutamate 195 contribute to the active site.

Part of the FGAM synthase complex composed of 1 PurL, 1 PurQ and 2 PurS subunits.

Its subcellular location is the cytoplasm. The catalysed reaction is N(2)-formyl-N(1)-(5-phospho-beta-D-ribosyl)glycinamide + L-glutamine + ATP + H2O = 2-formamido-N(1)-(5-O-phospho-beta-D-ribosyl)acetamidine + L-glutamate + ADP + phosphate + H(+). It catalyses the reaction L-glutamine + H2O = L-glutamate + NH4(+). It functions in the pathway purine metabolism; IMP biosynthesis via de novo pathway; 5-amino-1-(5-phospho-D-ribosyl)imidazole from N(2)-formyl-N(1)-(5-phospho-D-ribosyl)glycinamide: step 1/2. Functionally, part of the phosphoribosylformylglycinamidine synthase complex involved in the purines biosynthetic pathway. Catalyzes the ATP-dependent conversion of formylglycinamide ribonucleotide (FGAR) and glutamine to yield formylglycinamidine ribonucleotide (FGAM) and glutamate. The FGAM synthase complex is composed of three subunits. PurQ produces an ammonia molecule by converting glutamine to glutamate. PurL transfers the ammonia molecule to FGAR to form FGAM in an ATP-dependent manner. PurS interacts with PurQ and PurL and is thought to assist in the transfer of the ammonia molecule from PurQ to PurL. The polypeptide is Phosphoribosylformylglycinamidine synthase subunit PurQ (Staphylococcus aureus (strain Mu50 / ATCC 700699)).